The sequence spans 174 residues: Fimbria A protein (174 aa).

The first 22 residues, 1-22 (MKLNKIMLATVLAFGVSSLANA), serve as a signal peptide directing secretion. The cysteines at positions 41 and 80 are disulfide-linked.

It belongs to the fimbrial protein family.

The protein resides in the fimbrium. Major structural component of mannose-resistant fimbriae of Serratia marcescens. This Serratia marcescens protein is Fimbria A protein (smfA).